We begin with the raw amino-acid sequence, 260 residues long: Flagellar basal-body rod protein FlgG (260 aa).

Belongs to the flagella basal body rod proteins family. As to quaternary structure, the basal body constitutes a major portion of the flagellar organelle and consists of four rings (L,P,S, and M) mounted on a central rod. The rod consists of about 26 subunits of FlgG in the distal portion, and FlgB, FlgC and FlgF are thought to build up the proximal portion of the rod with about 6 subunits each.

The protein resides in the bacterial flagellum basal body. In Escherichia coli O157:H7, this protein is Flagellar basal-body rod protein FlgG (flgG).